We begin with the raw amino-acid sequence, 73 residues long: uncharacterized protein (73 aa).

A signal peptide spans Met1–Asp22. Residues Thr44–Tyr66 form a helical membrane-spanning segment.

The protein resides in the membrane. This is an uncharacterized protein from Bacillus subtilis (strain 168).